The primary structure comprises 431 residues: Urokinase-type plasminogen activator (431 aa).

Residues 1-20 form the signal peptide; sequence MRALLARLLLCVLVVSDSKG. An EGF-like domain is found at 27–63; the sequence is VPSNCDCLNGGTCVSNKYFSNIHWCNCPKKFGGQHCE. 6 disulfides stabilise this stretch: C31–C39, C33–C51, C53–C62, C70–C151, C91–C133, and C122–C146. The interval 34–57 is binds urokinase plasminogen activator surface receptor; it reads LNGGTCVSNKYFSNIHWCNCPKKF. O-linked (Fuc) threonine glycosylation is present at T38. The Kringle domain occupies 70 to 151; the sequence is CYEGNGHFYR…LVQECMVHDC (82 aa). Positions 152–177 are connecting peptide; it reads ADGKKPSSPPEELKFQCGQKTLRPRF. Phosphoserine is present on S158. 6 cysteine pairs are disulfide-bonded: C168/C299, C209/C225, C217/C288, C313/C382, C345/C361, and C372/C400. The 246-residue stretch at 179 to 424 folds into the Peptidase S1 domain; the sequence is IIGGEFTTIE…FLPWIRSHTK (246 aa). Catalysis depends on charge relay system residues H224 and D275. Residue N322 is glycosylated (N-linked (GlcNAc...) asparagine). At S323 the chain carries Phosphoserine. Catalysis depends on S376, which acts as the Charge relay system.

Belongs to the peptidase S1 family. In terms of assembly, found in high and low molecular mass forms. Each consists of two chains, A and B. The high molecular mass form contains a long chain A which is cleaved to yield a short chain A. Forms heterodimer with SERPINA5. Binds LRP1B; binding is followed by internalization and degradation. Interacts with MRC2. Interacts with PLAUR. In complex with SERPINE1, interacts with PLAUR/uPAR. Interacts with SORL1 and LRP1, either alone or in complex with SERPINE1; these interactions are abolished in the presence of LRPAP1/RAP. The ternary complex composed of PLAUR-PLAU-PAI1 also interacts with SORLA. In terms of processing, phosphorylation of Ser-158 and Ser-323 abolishes proadhesive ability but does not interfere with receptor binding. Produced as an inactive single-chain protein (pro-uPA or sc-uPA), is processed into the active disulfide-linked two-chain form of PLAU/uPA by a proteolytic event mediated, at least, by TMPRSS4. As to expression, expressed in the prostate gland and prostate cancers.

The protein resides in the secreted. The enzyme catalyses Specific cleavage of Arg-|-Val bond in plasminogen to form plasmin.. Its activity is regulated as follows. Inhibited by SERPINA5. Inhibited by SERPINE1. In terms of biological role, specifically cleaves the zymogen plasminogen to form the active enzyme plasmin. The chain is Urokinase-type plasminogen activator from Homo sapiens (Human).